The chain runs to 348 residues: ATPase GET3 (348 aa).

26–33 serves as a coordination point for ATP; it reads KGGVGKTT. Residue aspartate 57 is part of the active site. Glutamate 241 and asparagine 268 together coordinate ATP. Residues cysteine 280 and cysteine 283 each contribute to the Zn(2+) site. 310-312 is an ATP binding site; that stretch reads PLL.

It belongs to the arsA ATPase family. Homodimer. Component of the Golgi to ER traffic (GET) complex, which is composed of GET1, GET2 and GET3. Within the complex, GET1 and GET2 form a heterotetramer which is stabilized by phosphatidylinositol binding and which binds to the GET3 homodimer. Interacts with the chloride channel protein GEF1.

The protein localises to the cytoplasm. It localises to the endoplasmic reticulum. Its subcellular location is the golgi apparatus. In terms of biological role, ATPase required for the post-translational delivery of tail-anchored (TA) proteins to the endoplasmic reticulum. Recognizes and selectively binds the transmembrane domain of TA proteins in the cytosol. This complex then targets to the endoplasmic reticulum by membrane-bound receptors GET1 and GET2, where the tail-anchored protein is released for insertion. This process is regulated by ATP binding and hydrolysis. ATP binding drives the homodimer towards the closed dimer state, facilitating recognition of newly synthesized TA membrane proteins. ATP hydrolysis is required for insertion. Subsequently, the homodimer reverts towards the open dimer state, lowering its affinity for the GET1-GET2 receptor, and returning it to the cytosol to initiate a new round of targeting. Cooperates with the HDEL receptor ERD2 to mediate the ATP-dependent retrieval of resident ER proteins that contain a C-terminal H-D-E-L retention signal from the Golgi to the ER. Involved in low-level resistance to the oxyanions arsenite and arsenate, and in heat tolerance. In Debaryomyces hansenii (strain ATCC 36239 / CBS 767 / BCRC 21394 / JCM 1990 / NBRC 0083 / IGC 2968) (Yeast), this protein is ATPase GET3.